A 215-amino-acid polypeptide reads, in one-letter code: Pyrophosphatase PpaX (215 aa).

Catalysis depends on Asp-9, which acts as the Nucleophile.

The protein belongs to the HAD-like hydrolase superfamily. PpaX family. Mg(2+) is required as a cofactor.

The catalysed reaction is diphosphate + H2O = 2 phosphate + H(+). Hydrolyzes pyrophosphate formed during P-Ser-HPr dephosphorylation by HPrK/P. Might play a role in controlling the intracellular pyrophosphate pool. This chain is Pyrophosphatase PpaX, found in Halalkalibacterium halodurans (strain ATCC BAA-125 / DSM 18197 / FERM 7344 / JCM 9153 / C-125) (Bacillus halodurans).